The chain runs to 314 residues: uncharacterized protein (314 aa).

In terms of domain architecture, HTH araC/xylS-type spans 192–289; that stretch reads TEVKLHIKDN…GSSPGLFRSL (98 aa). 2 DNA-binding regions (H-T-H motif) span residues 209–230 and 257–279; these read TDVASHFHISGRHLSRLFAAEL and IKEIAEEIGFSVHYFTRVFSAKI.

This is an uncharacterized protein from Bacillus subtilis (strain 168).